A 273-amino-acid polypeptide reads, in one-letter code: Dermonecrotic toxin LapSicTox-alphaIB1aiv (273 aa).

Residue H5 is part of the active site. Positions 25 and 27 each coordinate Mg(2+). The active-site Nucleophile is the H41. 2 cysteine pairs are disulfide-bonded: C45-C51 and C47-C190. D85 is a Mg(2+) binding site. N-linked (GlcNAc...) asparagine glycosylation is present at N250.

The protein belongs to the arthropod phospholipase D family. Class II subfamily. Mg(2+) serves as cofactor. Expressed by the venom gland.

It localises to the secreted. The catalysed reaction is an N-(acyl)-sphingosylphosphocholine = an N-(acyl)-sphingosyl-1,3-cyclic phosphate + choline. It catalyses the reaction an N-(acyl)-sphingosylphosphoethanolamine = an N-(acyl)-sphingosyl-1,3-cyclic phosphate + ethanolamine. It carries out the reaction a 1-acyl-sn-glycero-3-phosphocholine = a 1-acyl-sn-glycero-2,3-cyclic phosphate + choline. The enzyme catalyses a 1-acyl-sn-glycero-3-phosphoethanolamine = a 1-acyl-sn-glycero-2,3-cyclic phosphate + ethanolamine. Its function is as follows. Dermonecrotic toxins cleave the phosphodiester linkage between the phosphate and headgroup of certain phospholipids (sphingolipid and lysolipid substrates), forming an alcohol (often choline) and a cyclic phosphate. This toxin acts on sphingomyelin (SM). It may also act on ceramide phosphoethanolamine (CPE), lysophosphatidylcholine (LPC) and lysophosphatidylethanolamine (LPE), but not on lysophosphatidylserine (LPS), and lysophosphatidylglycerol (LPG). It acts by transphosphatidylation, releasing exclusively cyclic phosphate products as second products. Induces dermonecrosis, hemolysis, increased vascular permeability, edema, inflammatory response, and platelet aggregation. The sequence is that of Dermonecrotic toxin LapSicTox-alphaIB1aiv from Loxosceles apachea (Apache recluse spider).